The sequence spans 102 residues: Citrate lyase acyl carrier protein (102 aa).

S14 carries the O-(phosphoribosyl dephospho-coenzyme A)serine modification.

It belongs to the CitD family. Oligomer with a subunit composition of (alpha,beta,gamma)6.

It localises to the cytoplasm. Covalent carrier of the coenzyme of citrate lyase. The polypeptide is Citrate lyase acyl carrier protein (Streptococcus pyogenes serotype M4 (strain MGAS10750)).